A 541-amino-acid chain; its full sequence is Membrane protein insertase YidC (541 aa).

5 helical membrane passes run 6–26, 349–369, 420–440, 457–477, and 500–520; these read NILL…WQAD, FVGN…GLLF, GGCL…WVLL, LSVQ…MFVM, and MIFT…WLVG.

The protein belongs to the OXA1/ALB3/YidC family. Type 1 subfamily. Interacts with the Sec translocase complex via SecD. Specifically interacts with transmembrane segments of nascent integral membrane proteins during membrane integration.

Its subcellular location is the cell inner membrane. Its function is as follows. Required for the insertion and/or proper folding and/or complex formation of integral membrane proteins into the membrane. Involved in integration of membrane proteins that insert both dependently and independently of the Sec translocase complex, as well as at least some lipoproteins. Aids folding of multispanning membrane proteins. This is Membrane protein insertase YidC from Shewanella sp. (strain ANA-3).